The following is a 237-amino-acid chain: Ribosomal RNA small subunit methyltransferase G (237 aa).

S-adenosyl-L-methionine is bound by residues Gly78, Phe83, 129–130, and Arg148; that span reads AE.

Belongs to the methyltransferase superfamily. RNA methyltransferase RsmG family.

It localises to the cytoplasm. Functionally, specifically methylates the N7 position of a guanine in 16S rRNA. The sequence is that of Ribosomal RNA small subunit methyltransferase G from Streptococcus pyogenes serotype M12 (strain MGAS9429).